A 237-amino-acid polypeptide reads, in one-letter code: Probable F-box protein At1g53815 (237 aa).

In terms of domain architecture, F-box spans 41–72; sequence ISNILSRLPLKSKAKCRCVSKLWSSIIRRPNY.

This is Probable F-box protein At1g53815 from Arabidopsis thaliana (Mouse-ear cress).